The sequence spans 104 residues: Protamine-2 (104 aa).

A phosphoserine mark is found at Ser8 and Ser10. A disordered region spans residues 23–104 (WQEQGRNGQE…SRRRRRCRRY (82 aa)). The segment covering 24–35 (QEQGRNGQEEQG) has biased composition (low complexity). Residue Ser37 is modified to Phosphoserine. Over residues 54-104 (YRRRRCSRRRRYRIHRRRSRSCRRRRRRSCRYRRRPRRGCRSRRRRRCRRY) the composition is skewed to basic residues.

It belongs to the protamine P2 family. In terms of assembly, interacts with TDRP. Proteolytic processing into mature chains is required for histone eviction during spermatogenesis. Transition proteins (TNP1 and TNP2) are required for processing. As to expression, testis.

It is found in the nucleus. The protein localises to the chromosome. In terms of biological role, protamines substitute for histones in the chromatin of sperm during the haploid phase of spermatogenesis. They compact sperm DNA into a highly condensed, stable and inactive complex. This chain is Protamine-2 (PRM2), found in Callithrix jacchus (White-tufted-ear marmoset).